The following is a 276-amino-acid chain: Thymidylate synthase (276 aa).

Arg-26 lines the dUMP pocket. His-56 contributes to the (6R)-5,10-methylene-5,6,7,8-tetrahydrofolate binding site. DUMP is bound at residue 131–132; that stretch reads RR. Catalysis depends on Cys-151, which acts as the Nucleophile. DUMP is bound by residues 178–181, Asn-189, and 219–221; these read RSAD and HIY. Residue Asp-181 participates in (6R)-5,10-methylene-5,6,7,8-tetrahydrofolate binding. Ala-275 contacts (6R)-5,10-methylene-5,6,7,8-tetrahydrofolate.

The protein belongs to the thymidylate synthase family. Bacterial-type ThyA subfamily. In terms of assembly, homodimer.

It is found in the cytoplasm. The enzyme catalyses dUMP + (6R)-5,10-methylene-5,6,7,8-tetrahydrofolate = 7,8-dihydrofolate + dTMP. Its pathway is pyrimidine metabolism; dTTP biosynthesis. Catalyzes the reductive methylation of 2'-deoxyuridine-5'-monophosphate (dUMP) to 2'-deoxythymidine-5'-monophosphate (dTMP) while utilizing 5,10-methylenetetrahydrofolate (mTHF) as the methyl donor and reductant in the reaction, yielding dihydrofolate (DHF) as a by-product. This enzymatic reaction provides an intracellular de novo source of dTMP, an essential precursor for DNA biosynthesis. In Polaromonas naphthalenivorans (strain CJ2), this protein is Thymidylate synthase.